Here is a 283-residue protein sequence, read N- to C-terminus: Formamidopyrimidine-DNA glycosylase (283 aa).

The Schiff-base intermediate with DNA role is filled by proline 2. The active-site Proton donor is the glutamate 3. Residue lysine 60 is the Proton donor; for beta-elimination activity of the active site. Positions 95, 114, and 159 each coordinate DNA. The segment at 244–278 adopts an FPG-type zinc-finger fold; sequence WVYGRHNQPCRVCGTPIERIKLGGRSSHFCPQCQP. Arginine 268 (proton donor; for delta-elimination activity) is an active-site residue.

It belongs to the FPG family. In terms of assembly, monomer. Zn(2+) is required as a cofactor.

It carries out the reaction Hydrolysis of DNA containing ring-opened 7-methylguanine residues, releasing 2,6-diamino-4-hydroxy-5-(N-methyl)formamidopyrimidine.. It catalyses the reaction 2'-deoxyribonucleotide-(2'-deoxyribose 5'-phosphate)-2'-deoxyribonucleotide-DNA = a 3'-end 2'-deoxyribonucleotide-(2,3-dehydro-2,3-deoxyribose 5'-phosphate)-DNA + a 5'-end 5'-phospho-2'-deoxyribonucleoside-DNA + H(+). Functionally, involved in base excision repair of DNA damaged by oxidation or by mutagenic agents. Acts as a DNA glycosylase that recognizes and removes damaged bases. Has a preference for oxidized purines, such as 7,8-dihydro-8-oxoguanine (8-oxoG). Has AP (apurinic/apyrimidinic) lyase activity and introduces nicks in the DNA strand. Cleaves the DNA backbone by beta-delta elimination to generate a single-strand break at the site of the removed base with both 3'- and 5'-phosphates. This Crocosphaera subtropica (strain ATCC 51142 / BH68) (Cyanothece sp. (strain ATCC 51142)) protein is Formamidopyrimidine-DNA glycosylase.